Reading from the N-terminus, the 194-residue chain is Large ribosomal subunit protein bL12m (194 aa).

The transit peptide at Met1 to Phe33 directs the protein to the mitochondrion. The N-linked (GlcNAc...) asparagine glycan is linked to Asn34. Residues Ala101 to Lys120 form a disordered region. Low complexity predominate over residues Pro105–Gly114.

It belongs to the bacterial ribosomal protein bL12 family. In terms of assembly, component of the mitochondrial large ribosomal subunit (mt-LSU). Mature yeast 74S mitochondrial ribosomes consist of a small (37S) and a large (54S) subunit. The 37S small subunit contains a 15S ribosomal RNA (15S mt-rRNA) and 34 different proteins. The 54S large subunit contains a 21S rRNA (21S mt-rRNA) and 46 different proteins. Post-translationally, N-glycosylated.

Its subcellular location is the mitochondrion. In terms of biological role, component of the mitochondrial ribosome (mitoribosome), a dedicated translation machinery responsible for the synthesis of mitochondrial genome-encoded proteins, including at least some of the essential transmembrane subunits of the mitochondrial respiratory chain. The mitoribosomes are attached to the mitochondrial inner membrane and translation products are cotranslationally integrated into the membrane. The chain is Large ribosomal subunit protein bL12m (MNP1) from Saccharomyces cerevisiae (strain ATCC 204508 / S288c) (Baker's yeast).